The sequence spans 126 residues: Profilin-1B (126 aa).

Positions 2 to 36 are actin binding; that stretch reads SWQTYVDTNLVGTGAVTQAAILGLDGNTWATSAGF. Lysine 104 carries the post-translational modification N6,N6,N6-trimethyllysine.

Belongs to the profilin family. In terms of assembly, occurs in many kinds of cells as a complex with monomeric actin in a 1:1 ratio.

Its subcellular location is the cytoplasm. It localises to the cytoskeleton. Functionally, binds to actin and affects the structure of the cytoskeleton. At high concentrations, profilin prevents the polymerization of actin, whereas it enhances it at low concentrations. By binding to PIP2, it inhibits the formation of IP3 and DG. This chain is Profilin-1B, found in Acanthamoeba castellanii (Amoeba).